A 408-amino-acid polypeptide reads, in one-letter code: Lysosomal phospholipase A and acyltransferase (408 aa).

Positions 1-31 (MGLRRGPCPAALLPGGFLFLLLLADPALLAG) are cleaved as a signal peptide. Residue Asp42 participates in substrate binding. Cysteines 61 and 85 form a disulfide. Asn95 is a glycosylation site (N-linked (GlcNAc...) asparagine). Ser194 acts as the Acyl-ester intermediate in catalysis. Ser194 provides a ligand contact to Zn(2+). Met195 provides a ligand contact to substrate. 2 N-linked (GlcNAc...) asparagine glycosylation sites follow: Asn269 and Asn285. 2 residues coordinate Zn(2+): Asp336 and Cys351. Residues Asp356 and His388 each act as charge relay system in the active site. His388 lines the Zn(2+) pocket. The N-linked (GlcNAc...) asparagine glycan is linked to Asn394.

The protein belongs to the AB hydrolase superfamily. Lipase family. N-glycosylated. N-glycosylation is important for maturation of the enzyme and normal subcellular location.

The protein localises to the secreted. It is found in the lysosome. Its subcellular location is the membrane. The catalysed reaction is a 1,2-diacyl-sn-glycero-3-phosphocholine + H2O = a 2-acyl-sn-glycero-3-phosphocholine + a fatty acid + H(+). It carries out the reaction 1-hexadecanoyl-2-(9Z-octadecenoyl)-sn-glycero-3-phosphocholine + H2O = 2-(9Z-octadecenoyl)-sn-glycero-3-phosphocholine + hexadecanoate + H(+). It catalyses the reaction 1,2-di-(9Z-octadecenoyl)-sn-glycero-3-phosphocholine + H2O = 2-(9Z-octadecenoyl)-sn-glycero-3-phosphocholine + (9Z)-octadecenoate + H(+). The enzyme catalyses 1-hexadecanoyl-2-glutaroyl-sn-glycero-3-phosphocholine + H2O = 2-glutaroyl-sn-glycero-3-phosphocholine + hexadecanoate + H(+). The catalysed reaction is 1-hexadecanoyl-2-nonadioyl-sn-glycero-3-phosphocholine + H2O = 2-nonadioyl-sn-glycero-3-phosphocholine + hexadecanoate + H(+). It carries out the reaction 1-hexadecanoyl-2-(5-oxopentanoyl)-sn-glycero-3-phosphocholine + H2O = 2-(5-oxopentanoyl)-sn-glycero-3-phosphocholine + hexadecanoate + H(+). It catalyses the reaction 1-hexadecanoyl-2-(9-oxononanoyl)-sn-glycero-3-phosphocholine + H2O = 2-(9-oxononanoyl)-sn-glycero-3-phosphocholine + hexadecanoate + H(+). The enzyme catalyses 1,2-dihexadecanoyl-sn-glycero-3-phosphocholine + H2O = 2-hexadecanoyl-sn-glycero-3-phosphocholine + hexadecanoate + H(+). The catalysed reaction is a 1,2-diacyl-sn-glycero-3-phosphocholine + H2O = a 1-acyl-sn-glycero-3-phosphocholine + a fatty acid + H(+). It carries out the reaction 1-hexadecanoyl-2-(9Z-octadecenoyl)-sn-glycero-3-phosphocholine + H2O = 1-hexadecanoyl-sn-glycero-3-phosphocholine + (9Z)-octadecenoate + H(+). It catalyses the reaction 1,2-di-(9Z-octadecenoyl)-sn-glycero-3-phosphocholine + H2O = 1-(9Z-octadecenoyl)-sn-glycero-3-phosphocholine + (9Z)-octadecenoate + H(+). The enzyme catalyses 1,2-dihexadecanoyl-sn-glycero-3-phosphocholine + H2O = 1-hexadecanoyl-sn-glycero-3-phosphocholine + hexadecanoate + H(+). The catalysed reaction is a 1-acyl-sn-glycero-3-phosphocholine + H2O = sn-glycerol 3-phosphocholine + a fatty acid + H(+). It carries out the reaction 1-hexadecanoyl-sn-glycero-3-phosphocholine + H2O = sn-glycerol 3-phosphocholine + hexadecanoate + H(+). It catalyses the reaction N-(acetyl)-sphing-4-enine + a 1,2-diacyl-sn-glycero-3-phosphoethanolamine = 1-O-acyl-N-(acetyl)-sphing-4-enine + a 2-acyl-sn-glycero-3-phosphoethanolamine. The enzyme catalyses 1-hexadecanoyl-2-(9Z-octadecenoyl)-sn-glycero-3-phosphoethanolamine + N-(acetyl)-sphing-4-enine = 2-(9Z-octadecenoyl)-sn-glycero-3-phosphoethanolamine + 1-hexadecanoyl-N-(acetyl)-sphing-4-enine. The catalysed reaction is 1-hexadecanoyl-2-(9Z,12Z-octadecadienoyl)-sn-glycero-3-phosphoethanolamine + N-(acetyl)-sphing-4-enine = 2-(9Z,12Z)-octadecadienoyl-sn-glycero-3-phosphoethanolamine + 1-hexadecanoyl-N-(acetyl)-sphing-4-enine. It carries out the reaction 1-hexadecanoyl-2-(5Z,8Z,11Z,14Z-eicosatetraenoyl)-sn-glycero-3-phosphoethanolamine + N-(acetyl)-sphing-4-enine = 2-(5Z,8Z,11Z,14Z)-eicosatetraenoyl-sn-glycero-3-phosphoethanolamine + 1-hexadecanoyl-N-(acetyl)-sphing-4-enine. It catalyses the reaction N-(acetyl)-sphing-4-enine + a 1,2-diacyl-sn-glycero-3-phosphoethanolamine = 1-O-acyl-N-(acetyl)-sphing-4-enine + a 1-acyl-sn-glycero-3-phosphoethanolamine. The enzyme catalyses 1-hexadecanoyl-2-(9Z-octadecenoyl)-sn-glycero-3-phosphoethanolamine + N-(acetyl)-sphing-4-enine = 1-(9Z-octadecenoyl)-N-(acetyl)-sphing-4-enine + 1-hexadecanoyl-sn-glycero-3-phosphoethanolamine. The catalysed reaction is 1-hexadecanoyl-2-(9Z,12Z-octadecadienoyl)-sn-glycero-3-phosphoethanolamine + N-(acetyl)-sphing-4-enine = 1-(9Z,12Z-octadecadienoyl)-N-acetylsphing-4-enine + 1-hexadecanoyl-sn-glycero-3-phosphoethanolamine. It carries out the reaction 1-hexadecanoyl-2-(5Z,8Z,11Z,14Z-eicosatetraenoyl)-sn-glycero-3-phosphoethanolamine + N-(acetyl)-sphing-4-enine = 1-(5Z,8Z,11Z,14Z)-eicosatetraenoyl-N-(acetyl)-sphing-4-enine + 1-hexadecanoyl-sn-glycero-3-phosphoethanolamine. It catalyses the reaction N-(acetyl)-sphing-4-enine + a 1,2-diacyl-sn-glycero-3-phosphocholine = 1-O-acyl-N-(acetyl)-sphing-4-enine + a 2-acyl-sn-glycero-3-phosphocholine. The enzyme catalyses 1-hexadecanoyl-2-(9Z-octadecenoyl)-sn-glycero-3-phosphocholine + N-(acetyl)-sphing-4-enine = 1-hexadecanoyl-N-(acetyl)-sphing-4-enine + 2-(9Z-octadecenoyl)-sn-glycero-3-phosphocholine. The catalysed reaction is 1-hexadecanoyl-2-(9Z,12Z-octadecadienoyl)-sn-glycero-3-phosphocholine + N-(acetyl)-sphing-4-enine = 2-(9Z,12Z-octadecadienoyl)-sn-glycero-3-phosphocholine + 1-hexadecanoyl-N-(acetyl)-sphing-4-enine. It carries out the reaction 1-hexadecanoyl-2-(5Z,8Z,11Z,14Z-eicosatetraenoyl)-sn-glycero-3-phosphocholine + N-(acetyl)-sphing-4-enine = 1-hexadecanoyl-N-(acetyl)-sphing-4-enine + 2-(5Z,8Z,11Z,14Z)-eicosatetraenoyl-sn-glycero-3-phosphocholine. It catalyses the reaction 1-hexadecanoyl-2-(4Z,7Z,10Z,13Z,16Z,19Z-docosahexaenoyl)-sn-glycero-3-phosphocholine + N-(acetyl)-sphing-4-enine = 2-(4Z,7Z,10Z,13Z,16Z,19Z-docosahexaenoyl)-sn-glycero-3-phosphocholine + 1-hexadecanoyl-N-(acetyl)-sphing-4-enine. The enzyme catalyses 1-hexadecanoyl-2-nonadioyl-sn-glycero-3-phosphocholine + N-(acetyl)-sphing-4-enine = 2-nonadioyl-sn-glycero-3-phosphocholine + 1-hexadecanoyl-N-(acetyl)-sphing-4-enine. The catalysed reaction is 1-octadecanoyl-2-(9Z-octadecenoyl)-sn-glycero-3-phosphocholine + N-(acetyl)-sphing-4-enine = 1-octadecanoyl-N-(acetyl)-sphing-4-enine + 2-(9Z-octadecenoyl)-sn-glycero-3-phosphocholine. It carries out the reaction 1-(9Z)-octadecenoyl-2-octadecanoyl-sn-glycero-3-phosphocholine + N-(acetyl)-sphing-4-enine = 2-octadecanoyl-sn-glycero-3-phosphocholine + 1-(9Z-octadecenoyl)-N-(acetyl)-sphing-4-enine. It catalyses the reaction 1-octadecanoyl-2-(5Z,8Z,11Z,14Z-eicosatetraenoyl)-sn-glycero-3-phosphocholine + N-(acetyl)-sphing-4-enine = 1-octadecanoyl-N-(acetyl)-sphing-4-enine + 2-(5Z,8Z,11Z,14Z)-eicosatetraenoyl-sn-glycero-3-phosphocholine. The enzyme catalyses 1-(9Z-octadecenoyl)-2-hexadecanoyl-sn-glycero-3-phosphocholine + N-(acetyl)-sphing-4-enine = 1-(9Z-octadecenoyl)-N-(acetyl)-sphing-4-enine + 2-hexadecanoyl-sn-glycero-3-phosphocholine. The catalysed reaction is N-(acetyl)-sphing-4-enine + a 1,2-diacyl-sn-glycero-3-phosphocholine = 1-O-acyl-N-(acetyl)-sphing-4-enine + a 1-acyl-sn-glycero-3-phosphocholine. It carries out the reaction 1-hexadecanoyl-2-(9Z-octadecenoyl)-sn-glycero-3-phosphocholine + N-(acetyl)-sphing-4-enine = 1-(9Z-octadecenoyl)-N-(acetyl)-sphing-4-enine + 1-hexadecanoyl-sn-glycero-3-phosphocholine. It catalyses the reaction 1-hexadecanoyl-2-(9Z,12Z-octadecadienoyl)-sn-glycero-3-phosphocholine + N-(acetyl)-sphing-4-enine = 1-(9Z,12Z-octadecadienoyl)-N-acetylsphing-4-enine + 1-hexadecanoyl-sn-glycero-3-phosphocholine. The enzyme catalyses 1-hexadecanoyl-2-(5Z,8Z,11Z,14Z-eicosatetraenoyl)-sn-glycero-3-phosphocholine + N-(acetyl)-sphing-4-enine = 1-(5Z,8Z,11Z,14Z)-eicosatetraenoyl-N-(acetyl)-sphing-4-enine + 1-hexadecanoyl-sn-glycero-3-phosphocholine. The catalysed reaction is 1-hexadecanoyl-2-(4Z,7Z,10Z,13Z,16Z,19Z-docosahexaenoyl)-sn-glycero-3-phosphocholine + N-(acetyl)-sphing-4-enine = 1-(4Z,7Z,10Z,13Z,16Z,19Z-docosahexaenoyl)-N-(acetyl)-sphing-4-enine + 1-hexadecanoyl-sn-glycero-3-phosphocholine. It carries out the reaction 1-octadecanoyl-2-(9Z-octadecenoyl)-sn-glycero-3-phosphocholine + N-(acetyl)-sphing-4-enine = 1-(9Z-octadecenoyl)-N-(acetyl)-sphing-4-enine + 1-octadecanoyl-sn-glycero-3-phosphocholine. It catalyses the reaction 1-octadecanoyl-2-(9Z,12Z)-octadecadienoyl-sn-glycero-3-phosphocholine + N-(acetyl)-sphing-4-enine = 1-(9Z,12Z-octadecadienoyl)-N-acetylsphing-4-enine + 1-octadecanoyl-sn-glycero-3-phosphocholine. The enzyme catalyses 1-(9Z-octadecenoyl)-2-hexadecanoyl-sn-glycero-3-phosphocholine + N-(acetyl)-sphing-4-enine = 1-hexadecanoyl-N-(acetyl)-sphing-4-enine + 1-(9Z-octadecenoyl)-sn-glycero-3-phosphocholine. The catalysed reaction is 1-(9Z)-octadecenoyl-2-octadecanoyl-sn-glycero-3-phosphocholine + N-(acetyl)-sphing-4-enine = 1-octadecanoyl-N-(acetyl)-sphing-4-enine + 1-(9Z-octadecenoyl)-sn-glycero-3-phosphocholine. It carries out the reaction 1,2-di-(9Z-octadecenoyl)-sn-glycero-3-phosphocholine + N-(acetyl)-sphing-4-enine = 1-(9Z-octadecenoyl)-N-(acetyl)-sphing-4-enine + 1-(9Z-octadecenoyl)-sn-glycero-3-phosphocholine. It catalyses the reaction 1-octadecanoyl-2-(5Z,8Z,11Z,14Z-eicosatetraenoyl)-sn-glycero-3-phosphocholine + N-(acetyl)-sphing-4-enine = 1-(5Z,8Z,11Z,14Z)-eicosatetraenoyl-N-(acetyl)-sphing-4-enine + 1-octadecanoyl-sn-glycero-3-phosphocholine. The enzyme catalyses a 1,2-diacyl-sn-glycero-3-phospho-L-serine + N-(acetyl)-sphing-4-enine = a 2-acyl-sn-glycero-3-phospho-L-serine + 1-O-acyl-N-(acetyl)-sphing-4-enine. The catalysed reaction is 1-octadecanoyl-2-(9Z-octadecenoyl)-sn-glycero-3-phospho-L-serine + N-(acetyl)-sphing-4-enine = 2-(9Z-octadecenoyl)-sn-glycero-3-phospho-L-serine + 1-octadecanoyl-N-(acetyl)-sphing-4-enine. It carries out the reaction a 1,2-diacyl-sn-glycero-3-phospho-L-serine + N-(acetyl)-sphing-4-enine = 1-O-acyl-N-(acetyl)-sphing-4-enine + a 1-acyl-sn-glycero-3-phospho-L-serine. It catalyses the reaction 1-octadecanoyl-2-(9Z-octadecenoyl)-sn-glycero-3-phospho-L-serine + N-(acetyl)-sphing-4-enine = 1-octadecanoyl-sn-glycero-3-phosphoserine + 1-(9Z-octadecenoyl)-N-(acetyl)-sphing-4-enine. The enzyme catalyses a 1,2-diacyl-sn-glycero-3-phospho-(1'-sn-glycerol) + N-(acetyl)-sphing-4-enine = 2-acyl-sn-glycero-3-phospho-(1'-sn-glycerol) + 1-O-acyl-N-(acetyl)-sphing-4-enine. The catalysed reaction is 1-octadecanoyl-2-(9Z-octadecenoyl)-sn-glycero-3-phospho-(1'-sn-glycerol) + N-(acetyl)-sphing-4-enine = 2-(9Z-octadecenoyl)-sn-glycero-3-phospho-(1'-sn-glycerol) + 1-octadecanoyl-N-(acetyl)-sphing-4-enine. It carries out the reaction a 1,2-diacyl-sn-glycero-3-phospho-(1'-sn-glycerol) + N-(acetyl)-sphing-4-enine = 1-O-acyl-N-(acetyl)-sphing-4-enine + 1-acyl-sn-glycero-3-phospho-(1'-sn-glycerol). It catalyses the reaction 1-octadecanoyl-2-(9Z-octadecenoyl)-sn-glycero-3-phospho-(1'-sn-glycerol) + N-(acetyl)-sphing-4-enine = 1-octadecanoyl-sn-glycero-3-phospho-(1'-sn-glycerol) + 1-(9Z-octadecenoyl)-N-(acetyl)-sphing-4-enine. The enzyme catalyses an N-acylethanolamine + a 1,2-diacyl-sn-glycero-3-phosphocholine = 2-(acylamino)ethyl fatty acid + a 2-acyl-sn-glycero-3-phosphocholine. The catalysed reaction is an N-acylethanolamine + a 1,2-diacyl-sn-glycero-3-phosphocholine = 2-(acylamino)ethyl fatty acid + a 1-acyl-sn-glycero-3-phosphocholine. It carries out the reaction N-(5Z,8Z,11Z,14Z-eicosatetraenoyl)-ethanolamine + 1,2-di-(9Z-octadecenoyl)-sn-glycero-3-phosphocholine = 2-[(5Z,8Z,11Z,14Z)-eicosatetraenoylamino]ethyl (9Z)-octadecenoate + (9Z-octadecenoyl)-sn-glycero-3-phosphocholine. It catalyses the reaction N-(9Z-octadecenoyl) ethanolamine + 1,2-di-(9Z-octadecenoyl)-sn-glycero-3-phosphocholine = 2-[(9Z)-octadecenoylamino]ethyl (9Z)-octadecenoate + (9Z-octadecenoyl)-sn-glycero-3-phosphocholine. The enzyme catalyses a 3-acyl-sn-glycerol + a 1,2-diacyl-sn-glycero-3-phosphocholine = a 1,3-diacylglycerol + a 1-acyl-sn-glycero-3-phosphocholine. The catalysed reaction is a 3-acyl-sn-glycerol + a 1,2-diacyl-sn-glycero-3-phosphocholine = a 1,3-diacylglycerol + a 2-acyl-sn-glycero-3-phosphocholine. It carries out the reaction 3-(9Z-octadecenoyl)-sn-glycerol + 1,2-di-(9Z-octadecenoyl)-sn-glycero-3-phosphocholine = 1,3-di-(9Z-octadecenoyl)-glycerol + (9Z-octadecenoyl)-sn-glycero-3-phosphocholine. It catalyses the reaction 3-hexadecanoyl-sn-glycerol + 1,2-di-(9Z-octadecenoyl)-sn-glycero-3-phosphocholine = 1-(9Z)-octadecenoyl-3-hexadecanoyl-sn-glycerol + (9Z-octadecenoyl)-sn-glycero-3-phosphocholine. The enzyme catalyses a 1-acyl-sn-glycerol + a 1,2-diacyl-sn-glycero-3-phosphocholine = a 1,3-diacylglycerol + a 2-acyl-sn-glycero-3-phosphocholine. The catalysed reaction is a 1-acyl-sn-glycerol + a 1,2-diacyl-sn-glycero-3-phosphocholine = a 1,3-diacylglycerol + a 1-acyl-sn-glycero-3-phosphocholine. It carries out the reaction 1-(9Z-octadecenoyl)-sn-glycerol + 1,2-di-(9Z-octadecenoyl)-sn-glycero-3-phosphocholine = 1,3-di-(9Z-octadecenoyl)-glycerol + (9Z-octadecenoyl)-sn-glycero-3-phosphocholine. It catalyses the reaction 1-hexadecanoyl-sn-glycerol + 1,2-di-(9Z-octadecenoyl)-sn-glycero-3-phosphocholine = 1-hexadecanoyl-3-(9Z)-octadecenoyl-sn-glycerol + (9Z-octadecenoyl)-sn-glycero-3-phosphocholine. The enzyme catalyses a 2-acylglycerol + a 1,2-diacyl-sn-glycero-3-phosphocholine = a 1,2-diacylglycerol + a 2-acyl-sn-glycero-3-phosphocholine. The catalysed reaction is a 2-acylglycerol + a 1,2-diacyl-sn-glycero-3-phosphocholine = a 1,2-diacylglycerol + a 1-acyl-sn-glycero-3-phosphocholine. It carries out the reaction 2-hexadecanoylglycerol + 1,2-di-(9Z-octadecenoyl)-sn-glycero-3-phosphocholine = 1-(9Z)-octadecenoyl-2-hexadecanoylglycerol + (9Z-octadecenoyl)-sn-glycero-3-phosphocholine. It catalyses the reaction 1-O-alkylglycerol + a 1,2-diacyl-sn-glycero-3-phosphocholine = 1-O-alkyl-3-acylglycerol + a 1-acyl-sn-glycero-3-phosphocholine. The enzyme catalyses 1-O-alkylglycerol + a 1,2-diacyl-sn-glycero-3-phosphocholine = 1-O-alkyl-3-acylglycerol + a 2-acyl-sn-glycero-3-phosphocholine. The catalysed reaction is 1-O-hexadecylglycerol + 1,2-di-(9Z-octadecenoyl)-sn-glycero-3-phosphocholine = 1-O-hexadecyl-3-(9Z)-octadecenoylglycerol + (9Z-octadecenoyl)-sn-glycero-3-phosphocholine. It carries out the reaction 1-O-alkyl-2-acyl-sn-glycerol + a 1,2-diacyl-sn-glycero-3-phosphocholine = 1-O-alkyl-2,3-diacyl-sn-glycerol + a 2-acyl-sn-glycero-3-phosphocholine. It catalyses the reaction 1-O-alkyl-2-acyl-sn-glycerol + a 1,2-diacyl-sn-glycero-3-phosphocholine = 1-O-alkyl-2,3-diacyl-sn-glycerol + a 1-acyl-sn-glycero-3-phosphocholine. The enzyme catalyses 1-O-hexadecyl-2-acetyl-sn-glycerol + 1,2-di-(9Z-octadecenoyl)-sn-glycero-3-phosphocholine = 1-O-hexadecyl-2-acetyl-3-(9Z)-octadecenoyl-sn-glycerol + (9Z-octadecenoyl)-sn-glycero-3-phosphocholine. The catalysed reaction is 1-O-hexadecyl-2-O-methyl-sn-glycerol + 1,2-di-(9Z-octadecenoyl)-sn-glycero-3-phosphocholine = 1-O-hexadecyl-2-O-methyl-3-(9Z)-octadecenoyl-sn-glycerol + (9Z-octadecenoyl)-sn-glycero-3-phosphocholine. It carries out the reaction a 1,2-diacyl-sn-glycero-3-phosphoethanolamine + H2O = a 1-acyl-sn-glycero-3-phosphoethanolamine + a fatty acid + H(+). It catalyses the reaction 1-acyl-2-(5Z,8Z,11Z,14Z)-eicosatetraenoyl-sn-glycero-3-phosphoethanolamine + H2O = a 1-acyl-sn-glycero-3-phosphoethanolamine + (5Z,8Z,11Z,14Z)-eicosatetraenoate + H(+). The enzyme catalyses a 1,2-diacyl-sn-glycero-3-phospho-(1'-sn-glycerol) + H2O = 1-acyl-sn-glycero-3-phospho-(1'-sn-glycerol) + a fatty acid + H(+). The catalysed reaction is 1-hexadecanoyl-2-(9Z-octadecenoyl)-sn-glycero-3-phospho-(1'-sn-glycerol) + H2O = 1-hexadecanoyl-sn-glycero-3-phospho-(1'-sn-glycerol) + (9Z)-octadecenoate + H(+). It carries out the reaction a 1,2-diacyl-sn-glycero-3-phospho-(1'-sn-glycerol) + H2O = 2-acyl-sn-glycero-3-phospho-(1'-sn-glycerol) + a fatty acid + H(+). It catalyses the reaction 1-hexadecanoyl-2-(9Z-octadecenoyl)-sn-glycero-3-phospho-(1'-sn-glycerol) + H2O = 2-(9Z-octadecenoyl)-sn-glycero-3-phospho-(1'-sn-glycerol) + hexadecanoate + H(+). Its function is as follows. Has dual calcium-independent phospholipase and O-acyltransferase activities with a potential role in glycerophospholipid homeostasis and remodeling of acyl groups of lipophilic alcohols present in acidic cellular compartments. Catalyzes hydrolysis of the ester bond of the fatty acyl group attached at sn-1 or sn-2 position of phospholipids (phospholipase A1 or A2 activity) and transfer it to the hydroxyl group at the first carbon of lipophilic alcohols (O-acyltransferase activity). Among preferred fatty acyl donors are phosphatidylcholines, phosphatidylethanolamines, phosphatidylglycerols and phosphatidylserines. Favors sn-2 over sn-1 deacylation of unsaturated fatty acyl groups of phosphatidylcholines, phosphatidylethanolamines, and phosphatidylglycerols. Among preferred fatty acyl acceptors are natural lipophilic alcohols including short-chain ceramide N-acetyl-sphingosine (C2 ceramide), alkylacylglycerols, monoacylglycerols, and acylethanolamides such as anandamide and oleoylethanolamide. Selectively hydrolyzes the sn-1 fatty acyl group of truncated oxidized phospholipids and may play a role in detoxification of reactive oxidized phospholipids during oxidative stress. Required for normal phospholipid degradation in alveolar macrophages with potential implications in the clearance of pulmonary surfactant, which is mainly composed of dipalmitoylphosphatidylcholine (1,2-dihexadecanoyl-sn-glycero-3-phosphocholine). Involved in the first step of bis(monoacylglycero)phosphate (BMP) de novo synthesis from phosphatidylglycerol (1,2-diacyl-sn-glycero-3-phospho-(1'-sn-glycerol), PG). BMP is an important player in cargo sorting and degradation, regulation of cellular cholesterol levels and intercellular communication. At neutral pH, hydrolyzes the sn-1 fatty acyl group of the lysophosphatidylcholines. The polypeptide is Lysosomal phospholipase A and acyltransferase (PLA2G15) (Canis lupus familiaris (Dog)).